A 1056-amino-acid chain; its full sequence is Carbamoyl phosphate synthase large chain (1056 aa).

The segment at methionine 1–glutamate 401 is carboxyphosphate synthetic domain. 12 residues coordinate ATP: arginine 129, arginine 169, glycine 175, glycine 176, lysine 208, isoleucine 210, glutamate 215, glycine 241, isoleucine 242, histidine 243, glutamine 284, and glutamate 298. The region spanning lysine 133–valine 327 is the ATP-grasp 1 domain. Glutamine 284, glutamate 298, and asparagine 300 together coordinate Mg(2+). Positions 284, 298, and 300 each coordinate Mn(2+). The segment at isoleucine 402 to serine 546 is oligomerization domain. Residues glutamine 547–histidine 929 form a carbamoyl phosphate synthetic domain region. The region spanning aspartate 671–leucine 861 is the ATP-grasp 2 domain. Residues arginine 707, alanine 746, leucine 748, glutamate 752, glycine 777, valine 778, histidine 779, serine 780, glutamine 820, and glutamate 832 each contribute to the ATP site. Residues glutamine 820, glutamate 832, and asparagine 834 each contribute to the Mg(2+) site. Residues glutamine 820, glutamate 832, and asparagine 834 each contribute to the Mn(2+) site. The 127-residue stretch at isoleucine 930–lysine 1056 folds into the MGS-like domain. Positions isoleucine 930–lysine 1056 are allosteric domain.

The protein belongs to the CarB family. In terms of assembly, composed of two chains; the small (or glutamine) chain promotes the hydrolysis of glutamine to ammonia, which is used by the large (or ammonia) chain to synthesize carbamoyl phosphate. Tetramer of heterodimers (alpha,beta)4. It depends on Mg(2+) as a cofactor. The cofactor is Mn(2+).

The catalysed reaction is hydrogencarbonate + L-glutamine + 2 ATP + H2O = carbamoyl phosphate + L-glutamate + 2 ADP + phosphate + 2 H(+). It carries out the reaction hydrogencarbonate + NH4(+) + 2 ATP = carbamoyl phosphate + 2 ADP + phosphate + 2 H(+). Its pathway is amino-acid biosynthesis; L-arginine biosynthesis; carbamoyl phosphate from bicarbonate: step 1/1. The protein operates within pyrimidine metabolism; UMP biosynthesis via de novo pathway; (S)-dihydroorotate from bicarbonate: step 1/3. Functionally, large subunit of the glutamine-dependent carbamoyl phosphate synthetase (CPSase). CPSase catalyzes the formation of carbamoyl phosphate from the ammonia moiety of glutamine, carbonate, and phosphate donated by ATP, constituting the first step of 2 biosynthetic pathways, one leading to arginine and/or urea and the other to pyrimidine nucleotides. The large subunit (synthetase) binds the substrates ammonia (free or transferred from glutamine from the small subunit), hydrogencarbonate and ATP and carries out an ATP-coupled ligase reaction, activating hydrogencarbonate by forming carboxy phosphate which reacts with ammonia to form carbamoyl phosphate. This chain is Carbamoyl phosphate synthase large chain, found in Limosilactobacillus reuteri (strain DSM 20016) (Lactobacillus reuteri).